Reading from the N-terminus, the 381-residue chain is Heterogeneous nuclear rnp K-like protein 2 (381 aa).

The interval 1–34 (MSQFFEAATPVAIPTNNTNGGSSDAGSAATGGAP) is disordered. A compositionally biased stretch (low complexity) spans 15 to 33 (TNNTNGGSSDAGSAATGGA). KH domains follow at residues 43–107 (TINH…IGDI), 156–221 (IGYV…LIEI), and 258–326 (NTRI…ESML). Positions 344 to 381 (LEAAEGDATVVTERSDSASFLEEKEEPQKNHDNKEEQS) are disordered. Residues Ser-358, Ser-360, and Ser-362 each carry the phosphoserine modification. The segment covering 369-381 (EPQKNHDNKEEQS) has biased composition (basic and acidic residues).

Belongs to the HEK2 family. In terms of assembly, binds RNA. Post-translationally, phosphorylated by the plasma membrane-Anchored casein kinase YCK1. Phosphorylation at its C-terminus reduces its RNA-binding capacity.

It is found in the cytoplasm. It localises to the P-body. Its subcellular location is the nucleus. The protein localises to the chromosome. The protein resides in the telomere. In terms of biological role, RNA-binding protein involved in the correct localization of transcripts in the cell. RNA localization is a widespread mechanism for achieving localized protein synthesis. Required for the asymmetric localization to the daughter cell nucleus of the ASH1 transcript, coding for a specific repressor of transcription. Overexpression inhibits translation of the ASH1 transcript. Involved in the stability of transcripts, like the MTL1 mRNA. Involved in structural and functional organization of telomeric chromatin and regulates silencing at the HMR locus. The protein is Heterogeneous nuclear rnp K-like protein 2 (HEK2) of Saccharomyces cerevisiae (strain JAY291) (Baker's yeast).